A 643-amino-acid chain; its full sequence is Thread biopolymer filament subunit alpha (643 aa).

Positions Met-1–Lys-13 are enriched in polar residues. Positions Met-1–Gly-34 are disordered. Positions Met-1–Arg-191 are head. The segment covering Ser-14–Lys-31 has biased composition (low complexity). Residues Glu-192–Ile-510 enclose the IF rod domain. Residues Lys-193–Ile-227 are coil 1A. The segment at Thr-228–Thr-240 is linker 1. A coil 1B region spans residues Ala-241–Ala-341. Residues Ala-342–Ile-362 form a linker 12 region. The segment at Asp-363 to Lys-381 is coil 2A. Positions Ser-382–Gln-389 are linker 2. The segment at Val-390–Ile-510 is coil 2B. The tail stretch occupies residues Ser-511–Tyr-643. Residues Ser-622–Tyr-643 form a disordered region.

This sequence belongs to the intermediate filament family. Coiled-coil heterodimer of an alpha and a gamma subunit. Assemble into 10 nm filaments. Forms a massive, conical, intermediate filament biopolymer of approximately 60 cm.

It localises to the secreted. It is found in the extracellular space. Released extracellularly into seawater and provides physical and biological defense against invasive organism by modulation of the viscoelastic properties of mucus. The sequence is that of Thread biopolymer filament subunit alpha from Eptatretus stoutii (Pacific hagfish).